The sequence spans 149 residues: Probable calcium-binding protein CML25/26 (149 aa).

EF-hand domains are found at residues 1-35, 37-72, 77-113, and 117-149; these read MASS…ALGE, VSEE…HQLQ, ESLR…LGSE, and LEME…MLMA. Ca(2+) is bound by residues D13, D15, D17, K19, E24, D50, D52, D54, and E61. Ca(2+) contacts are provided by D130, N132, D134, and E141.

Potential calcium sensor. The protein is Probable calcium-binding protein CML25/26 (CML25) of Oryza sativa subsp. japonica (Rice).